The sequence spans 158 residues: uncharacterized protein (158 aa).

Residues 109-143 form an FPG-type zinc finger; that stretch reads RVHARTGLPCPVCGDTVREVSFADKSFQYCPTCQT.

This is an uncharacterized protein from Mycobacterium tuberculosis (strain ATCC 25618 / H37Rv).